We begin with the raw amino-acid sequence, 970 residues long: uncharacterized protein (970 aa).

Positions 942-970 (QLSFEEDGWTESEPRPVRREAHVRAKERH) are disordered. A compositionally biased stretch (basic and acidic residues) spans 953–970 (SEPRPVRREAHVRAKERH).

This is an uncharacterized protein from Frog virus 3 (isolate Goorha) (FV-3).